The primary structure comprises 552 residues: Glutamine--tRNA ligase (552 aa).

The 'HIGH' region signature appears at 34-44 (PEPNGYLHIGH). ATP-binding positions include 35–37 (EPN) and 41–47 (HIGHAKS). 2 residues coordinate L-glutamine: aspartate 67 and tyrosine 212. Residues threonine 231, 261–262 (RL), and 269–271 (MSK) each bind ATP. The 'KMSKS' region motif lies at 268 to 272 (IMSKR).

Belongs to the class-I aminoacyl-tRNA synthetase family. Monomer.

It localises to the cytoplasm. It carries out the reaction tRNA(Gln) + L-glutamine + ATP = L-glutaminyl-tRNA(Gln) + AMP + diphosphate. The chain is Glutamine--tRNA ligase from Aliivibrio salmonicida (strain LFI1238) (Vibrio salmonicida (strain LFI1238)).